A 576-amino-acid chain; its full sequence is Acyl-CoA ligase sidI (576 aa).

The PTS2-type peroxisomal targeting signal motif lies at 3-11 (PVTTKTIRP). 3 residues coordinate ATP: Asp-439, Arg-454, and Lys-553.

This sequence belongs to the ATP-dependent AMP-binding enzyme family.

Its subcellular location is the peroxisome. The protein operates within siderophore biosynthesis. Its function is as follows. Acyl-CoA ligase; part of the gene cluster that mediates the biosynthesis of at least 11 siderophores, including beauverichelin A, dimerumic acid (DA), Na-dimethyl coprogen (NADC), eleutherazine B, ferricrocin (FC), fusarinine A, fusarinine C (FsC), metachelin A, mevalonolactone, rhodotorulic acid (RA) and tenellin. This cocktail of siderophores for iron metabolism is essential for virulence, and more specifically for the fungal virulence in penetrating through the host cuticle. Siderophore synthesis is also involved in conidial germination under iron-deficient conditions. For biosynthesis of fusarinine C, the transacylase SIDF transfers anhydromevalonyl to N(5)-hydroxyornithine. The required anhydromevalonyl-CoA moiety is derived from mevalonate by CoA ligation and dehydration catalyzed by SIDI and sidH respectively. The polypeptide is Acyl-CoA ligase sidI (Beauveria bassiana (strain ARSEF 2860) (White muscardine disease fungus)).